The chain runs to 434 residues: Beta-phenylalanine transaminase (434 aa).

A (S)-3-amino-3-phenylpropanoate-binding site is contributed by Arg41. 132-133 (GT) is a binding site for pyridoxal 5'-phosphate. N6-(pyridoxal phosphate)lysine is present on Lys267. Thr300 contacts pyridoxal 5'-phosphate.

This sequence belongs to the class-III pyridoxal-phosphate-dependent aminotransferase family. In terms of assembly, homodimer. Pyridoxal 5'-phosphate serves as cofactor.

It carries out the reaction (S)-3-amino-3-phenylpropanoate + 2-oxoglutarate = 3-oxo-3-phenylpropanoate + L-glutamate. The catalysed reaction is (S)-3-amino-3-phenylpropanoate + pyruvate = 3-oxo-3-phenylpropanoate + L-alanine. With respect to regulation, is inhibited by 2-aminooxyacetate (AOA), a mimic of beta-alanine and a known inhibitor of aminotransferases. In terms of biological role, aminotransferase that acts exclusively on beta-amino acids and exhibits a broad substrate range in vitro, accepting meta-, para- and, to a lesser extent, ortho-substituted beta-phenylalanine derivatives as amino donors, and 2-oxoglutarate or pyruvate as amino acceptors. Is highly enantioselective toward (S)-beta-phenylalanine (is not active with (R)-beta-phenylalanine) and derivatives with different substituents on the phenyl ring, allowing the kinetic resolution of various racemic beta-amino acids to yield (R)-beta-amino acids with &gt;95% enantiomeric excess (ee). Highly prefers aromatic beta-amino acids over aliphatic beta-amino acids; cannot use beta-alanine or beta-glutamate as substrate. Is likely involved in the beta-phenylalanine degradation pathway that allows V.paradoxus strain CBF3 to use beta-phenylalanine as a sole nitrogen source. In Variovorax paradoxus, this protein is Beta-phenylalanine transaminase.